The sequence spans 352 residues: D-alanine--D-alanine ligase (352 aa).

The ATP-grasp domain maps to lysine 135–glutamate 344. Residue glutamate 171–glutamate 226 coordinates ATP. The Mg(2+) site is built by aspartate 297, glutamate 311, and asparagine 313.

It belongs to the D-alanine--D-alanine ligase family. Mg(2+) is required as a cofactor. Requires Mn(2+) as cofactor.

The protein localises to the cytoplasm. It carries out the reaction 2 D-alanine + ATP = D-alanyl-D-alanine + ADP + phosphate + H(+). It participates in cell wall biogenesis; peptidoglycan biosynthesis. Its function is as follows. Cell wall formation. The chain is D-alanine--D-alanine ligase from Gloeothece citriformis (strain PCC 7424) (Cyanothece sp. (strain PCC 7424)).